The chain runs to 671 residues: DNA ligase (671 aa).

NAD(+) contacts are provided by residues 34–38 (DAEYD), 83–84 (SL), and Glu-117. Lys-119 acts as the N6-AMP-lysine intermediate in catalysis. NAD(+) contacts are provided by Arg-140, Glu-177, Lys-293, and Lys-317. Residues Cys-411, Cys-414, Cys-429, and Cys-434 each contribute to the Zn(2+) site. One can recognise a BRCT domain in the interval 591–671 (KVGGKFTGKT…EFLQMLEGEQ (81 aa)).

It belongs to the NAD-dependent DNA ligase family. LigA subfamily. Mg(2+) is required as a cofactor. The cofactor is Mn(2+).

The catalysed reaction is NAD(+) + (deoxyribonucleotide)n-3'-hydroxyl + 5'-phospho-(deoxyribonucleotide)m = (deoxyribonucleotide)n+m + AMP + beta-nicotinamide D-nucleotide.. Its function is as follows. DNA ligase that catalyzes the formation of phosphodiester linkages between 5'-phosphoryl and 3'-hydroxyl groups in double-stranded DNA using NAD as a coenzyme and as the energy source for the reaction. It is essential for DNA replication and repair of damaged DNA. This chain is DNA ligase, found in Geobacter metallireducens (strain ATCC 53774 / DSM 7210 / GS-15).